The following is a 277-amino-acid chain: Hydroxypyruvate/pyruvate aldolase (277 aa).

Catalysis depends on histidine 54, which acts as the Proton acceptor. Glutamate 158 and aspartate 184 together coordinate a divalent metal cation.

It belongs to the HpcH/HpaI aldolase family. A divalent metal cation serves as cofactor.

The enzyme catalyses D-glyceraldehyde + 3-hydroxypyruvate = (3R,4S,5R)-3,4,5,6-tetrahydroxy-2-oxohexanoate. It catalyses the reaction D-glyceraldehyde + 3-hydroxypyruvate = 2-dehydro-D-gluconate. The catalysed reaction is D-glyceraldehyde + 3-hydroxypyruvate = 2-dehydro-D-galactonate. It carries out the reaction D-glyceraldehyde + pyruvate = 2-dehydro-3-deoxy-L-galactonate. Functionally, aldolase which can catalyze in vitro the aldolisation reaction between hydroxypyruvate (HPA) or pyruvate (PA) and D-glyceraldehyde (D-GA). The condensation of hydroxypyruvate and D-glyceraldehyde produces (3R,4S,5R)-3,4,5,6-tetrahydroxy-2-oxohexanoate as the major product, 2-dehydro-D-gluconate and 2-dehydro-D-galactonate. The condensation of pyruvate and D-glyceraldehyde produces 2-dehydro-3-deoxy-L-galactonate as the major product. This is Hydroxypyruvate/pyruvate aldolase from Deinococcus radiodurans (strain ATCC 13939 / DSM 20539 / JCM 16871 / CCUG 27074 / LMG 4051 / NBRC 15346 / NCIMB 9279 / VKM B-1422 / R1).